Reading from the N-terminus, the 332-residue chain is Endonuclease 8-like 2 (332 aa).

The Schiff-base intermediate with DNA role is filled by P2. The Proton donor role is filled by E3. K50 functions as the Proton donor; for beta-elimination activity in the catalytic mechanism. An N6-acetyllysine modification is found at K50. The segment at 56-121 (FDPDEEMGPP…EDDSEYLERD (66 aa)) is disordered. Phosphoserine is present on S68. Over residues 74 to 84 (PQKEAQKEGAA) the composition is skewed to basic and acidic residues. Positions 94 to 105 (GQKTPDGSSQSA) are enriched in polar residues. K154 is subject to N6-acetyllysine. Residue N231 participates in DNA binding. An FPG-type zinc finger spans residues 284-320 (QVYQREQCPAGHQVMKEAFGPQDGLQRLTWWCPQCQP). Catalysis depends on R310, which acts as the Proton donor; for delta-elimination activity.

The protein belongs to the FPG family. In terms of assembly, binds EP300.

The protein localises to the nucleus. The catalysed reaction is 2'-deoxyribonucleotide-(2'-deoxyribose 5'-phosphate)-2'-deoxyribonucleotide-DNA = a 3'-end 2'-deoxyribonucleotide-(2,3-dehydro-2,3-deoxyribose 5'-phosphate)-DNA + a 5'-end 5'-phospho-2'-deoxyribonucleoside-DNA + H(+). Its activity is regulated as follows. Acetylation of Lys-50 leads to loss of DNA nicking activity. Functionally, involved in base excision repair of DNA damaged by oxidation or by mutagenic agents. Has DNA glycosylase activity towards 5-hydroxyuracil and other oxidized derivatives of cytosine with a preference for mismatched double-stranded DNA (DNA bubbles). Has low or no DNA glycosylase activity towards thymine glycol, 2-hydroxyadenine, hypoxanthine and 8-oxoguanine. Has AP (apurinic/apyrimidinic) lyase activity and introduces nicks in the DNA strand. Cleaves the DNA backbone by beta-delta elimination to generate a single-strand break at the site of the removed base with both 3'- and 5'-phosphates. The protein is Endonuclease 8-like 2 (NEIL2) of Pongo abelii (Sumatran orangutan).